The chain runs to 255 residues: Taurine import ATP-binding protein TauB (255 aa).

The ABC transporter domain occupies 2–229; that stretch reads LQISHLYADY…RFVAGESSRS (228 aa). An ATP-binding site is contributed by 34–41; the sequence is GPSGCGKT.

It belongs to the ABC transporter superfamily. Taurine importer (TC 3.A.1.17.1) family. The complex is composed of two ATP-binding proteins (TauB), two transmembrane proteins (TauC) and a solute-binding protein (TauA).

It is found in the cell inner membrane. It carries out the reaction taurine(out) + ATP + H2O = taurine(in) + ADP + phosphate + H(+). Part of the ABC transporter complex TauABC involved in taurine import. Responsible for energy coupling to the transport system. In Escherichia coli (strain K12), this protein is Taurine import ATP-binding protein TauB.